The following is a 516-amino-acid chain: L-amino-acid oxidase (516 aa).

An N-terminal signal peptide occupies residues 1 to 18; that stretch reads MNVFFMFSLLFLAALGSC. An intrachain disulfide couples Cys-28 to Cys-189. FAD-binding positions include 61–62, 81–82, Arg-89, and 103–106; these read MS, EA, and GPMR. Residues Arg-106 and His-239 each contribute to the substrate site. Residue Val-279 participates in FAD binding. The cysteines at positions 349 and 430 are disulfide-linked. N-linked (GlcNAc...) asparagine glycosylation is present at Asn-379. Tyr-390 is a binding site for substrate. Residues Glu-475 and 482–487 contribute to the FAD site; that span reads GWIDST. Substrate is bound at residue 482 to 483; sequence GW.

It belongs to the flavin monoamine oxidase family. FIG1 subfamily. Homodimer; non-covalently linked. It depends on FAD as a cofactor. In terms of processing, N-glycosylated. In terms of tissue distribution, expressed by the venom gland.

The protein localises to the secreted. It catalyses the reaction an L-alpha-amino acid + O2 + H2O = a 2-oxocarboxylate + H2O2 + NH4(+). Functionally, catalyzes an oxidative deamination of predominantly hydrophobic and aromatic L-amino acids, thus producing hydrogen peroxide that may contribute to the diverse toxic effects of this enzyme. Exhibits diverse biological activities, such as hemorrhage, hemolysis, edema, apoptosis of vascular endothelial cells or tumor cell lines, antibacterial and antiparasitic activities, as well as regulation of platelet aggregation. Effects of snake L-amino oxidases on platelets are controversial, since they either induce aggregation or inhibit agonist-induced aggregation. These different effects are probably due to different experimental conditions. This chain is L-amino-acid oxidase, found in Sistrurus catenatus edwardsii (Desert massasauga).